Here is a 212-residue protein sequence, read N- to C-terminus: uncharacterized protein (212 aa).

4 helical membrane passes run 20-40 (FLIG…LIIC), 70-90 (LMLL…YWLG), 155-175 (FVLI…YLGE), and 192-212 (QIVI…MEKI).

The protein belongs to the DedA family.

Its subcellular location is the cell membrane. This is an uncharacterized protein from Haemophilus influenzae (strain ATCC 51907 / DSM 11121 / KW20 / Rd).